An 815-amino-acid polypeptide reads, in one-letter code: MSRAIIENAGEHRVSILINGMYSIENINDVKMAYRDLLTDEDMFIFSAVAPTAYCNIDNHGRSKAAQAARDIAIANIAPDIVYVISFFEGHGDSYTVSIPADDVPWKTVCVCHDLIPLLNKERYLGDPNFREFYMNKLAEFERADAIFAISQSAAQEVIEYTDIPSDRVLNISSAVGEDFAVIDYSAEHIQSLKDKYRLPDEFILTLAMIEPRKNIEAPIHAYSMLPAELQQRYPMVLAYKVHPEGLERILRLAESYGLSRSQLIFTGFLTDDDLIALYNLCKLFVFPSLHEGFGLPPLEAMRCGAATLGSNITSLPEVIGWEDAMFNPHDVQDIRRVMEKALTDEAFYRELKAHALTQSAKFSWANTAHLAIDGFTRLLQSSKEVDAGQTEGVTTSRIQTMQKIDALSEVDRLGLAWAVARNGYKQHTRKLLVDISVLAKHDAKTGIQRVSRSILSELLKSGVPGYEVSAVYYTPGECYRYANQYLSSNFPGEYGADEPVLFSKDDILIATDLTAHLFPEVVTQIDCMRAAGAFACFVVHDILPLRRPEWSIEGIQREFPIWLSCLAEHADRLICVSASVAEDVKAWIAENSHWVKPNPLLTVSNFHLGADLDASVPSTGMPDNAQALLATMAAAPSFIMVGTMEPRKGHAQTLAAFEELWCEGKNYNLFIVGKQGWNVDSLCEKLRHHPQLNKKLFWLQNISDEFLVELYARSRALIFASQGEGFGLPLIEAAQKKLPVIIRDIPVFKEIAQEHAWYFSGEAPADIAKAVEDWLALYEQNAHPRSENINWLTWKQSAELLLKNLPIIAPAAKQ.

Positions 1–374 (MSRAIIENAG…WANTAHLAID (374 aa)) are alpha-(1-&gt;2)-mannosyltransferase. The alpha-(1-&gt;3)-mannosyltransferase stretch occupies residues 431–804 (KLLVDISVLA…WKQSAELLLK (374 aa)).

It belongs to the glycosyltransferase group 1 family. Glycosyltransferase 4 subfamily.

The protein resides in the cell inner membrane. It participates in bacterial outer membrane biogenesis; LPS O-antigen biosynthesis. Its function is as follows. Mannosyltransferase involved in the biosynthesis of the repeat unit of the lipopolysaccharide (LPS) O-antigen region. This is Serotype-specific mannosyltransferase WbdA from Escherichia coli.